Consider the following 1024-residue polypeptide: MARPKSSGSRMDRQLEHDVCELVRQVTGLQDEADPNFQLALDFVWSNFRFHRFLDVNSHKVEKTIEGIYEKFTIHSDLNKAASWKRLTKEFLNASLPSTEKIKTDAHYSILSLLLCLSDSPSNSNYVETPREKEVEKKDDFDWGKYLMEGEEIGLGPNIDTPNWSEDSDDEDAQQPLSREDSGIQVDRTPLEEQDHNRKGGPQVCWEDEPDSRSWLEQHVVHQYWTTRRFRIPHSAHLHSNLAAVWDQHLYSSDPLYVPDDRVVVTETQVIRETLWLLSGVKKMFIFQLIDGKVTVRNNIIVTHLTHSCLRSVLEQIAAYGQVVFRLQEFIDEVMGHSSESLPPGNGPIPKKQPDAPFRTYQAFMWALYKYFINFKEELTDIEKCVISSDTTITLAIVVNKLAPRLAQLKVLDKVFSTGVAEVPPDTRNVVRASHLLNTLYKAILEYDNVGEASEQTVSLLFSLWVETVRPYLQTVDEWIVHGHLWDGAREFIIQRNKNVPVNHRDFWYATYTLYSVSEKTENEDKVSDSASASSGSDQGPSSRQHTMVSFLKPVLKQIIMAGKSMQLLKNLNCAEGPACQAAARDAERKSLYTLFLESIQLRLQHGEDSAPHIVNEDQTTKENLIKMQSIAERHLELDDIHDPLLAINFARLYLEQSDFHEKFAGGDICVDRSSESVTCQTFELTLRSCLYPHIDKQYLHCCGNLMQTLKRDFRLVEYLQAMRNFFLMEGGDTMYDFYTSIFDKIREKETWQNVSFLNVQLQEAVGQRYPEDSLRLSISFENVDTTKKKLPVHILDGLTLSYKVPWPVDIVISVECQKIYNQVFLLLLQIKWAKYSLDVLLFGELGNAAERSQAKEDIPRDQDTPSQFGPPKESLRQQIHRMFLLRVKLMHFVNSLHNYIMTRILHSTGLEFQHQVEEAKDLDQLIKIHYRYLSTIHDRCLLREKVSFVKEAIMKVLNLALMFAEGWQAGLGAWQMESIEKMESDFKNCHMFLVTILNKAVCRGSFPHLESLALSLMAGMEQS.

3 disordered regions span residues 153 to 203 (IGLG…GGPQ), 523 to 545 (NEDK…SSRQ), and 853 to 873 (SQAK…GPPK). Positions 189–198 (TPLEEQDHNR) are enriched in basic and acidic residues. Low complexity predominate over residues 529 to 543 (DSASASSGSDQGPSS). Positions 853–864 (SQAKEDIPRDQD) are enriched in basic and acidic residues.

This sequence belongs to the TUBGCP family. As to quaternary structure, component of the gamma-tubulin ring complex (gTuRC) consisting of TUBGCP2, TUBGCP3, TUBGCP4, TUBGCP5 and TUBGCP6 and gamma-tubulin TUBG1 or TUBG2. TUBGCP2, TUBGCP3, TUBGCP4, TUBGCP5 and TUBGCP6 assemble in a 5:5:2:1:1 stoichiometry; each is associated with a gamma-tubulin, thereby arranging 14 gamma-tubulins in a helical manner. Gamma-tubulin at the first position is blocked by TUBGCP3 at the last position, allowing 13 protafilaments to grow into a microtubule. The gTuRC (via TUBGCP3 and TUBGCP6) interacts with ACTB and MZT1; the interactions form a luminal bridge that stabilizes the initial structure during complex assembly. The gTuRC (via TUBGCP2) interacts with MZT2A/MZT2B and CDK5RAP2 (via CM1 motif); the interactions play a role in gTuRC activation.

The protein resides in the cytoplasm. Its subcellular location is the cytoskeleton. It localises to the microtubule organizing center. It is found in the centrosome. Functionally, component of the gamma-tubulin ring complex (gTuRC) which mediates microtubule nucleation. The gTuRC regulates the minus-end nucleation of alpha-beta tubulin heterodimers that grow into microtubule protafilaments, a critical step in centrosome duplication and spindle formation. The chain is Gamma-tubulin complex component 5 (Tubgcp5) from Mus musculus (Mouse).